A 689-amino-acid chain; its full sequence is UvrABC system protein B (689 aa).

Positions 1–26 are disordered; sequence MSDASGPLQPDRPEADVPFRVEAPFD. The region spanning 40-422 is the Helicase ATP-binding domain; that stretch reads AGYEQGAQQQ…ERAQSANVVE (383 aa). 53–60 serves as a coordination point for ATP; it reads GVTGSGKT. Residues 106–129 carry the Beta-hairpin motif; the sequence is YYNYYQPEAYVEQTDKYIEKDASI. In terms of domain architecture, Helicase C-terminal spans 443–605; that stretch reads QVEDLMDRID…TTPTTIEKAV (163 aa). The UVR domain maps to 632–667; the sequence is ALLVEDLEARMEDAASNLEFELAADIRDRMRELREA. The disordered stretch occupies residues 668–689; that stretch reads FDLDGGDAPEDPGGVAPETEDW.

The protein belongs to the UvrB family. As to quaternary structure, forms a heterotetramer with UvrA during the search for lesions. Interacts with UvrC in an incision complex.

The protein localises to the cytoplasm. Its function is as follows. The UvrABC repair system catalyzes the recognition and processing of DNA lesions. A damage recognition complex composed of 2 UvrA and 2 UvrB subunits scans DNA for abnormalities. Upon binding of the UvrA(2)B(2) complex to a putative damaged site, the DNA wraps around one UvrB monomer. DNA wrap is dependent on ATP binding by UvrB and probably causes local melting of the DNA helix, facilitating insertion of UvrB beta-hairpin between the DNA strands. Then UvrB probes one DNA strand for the presence of a lesion. If a lesion is found the UvrA subunits dissociate and the UvrB-DNA preincision complex is formed. This complex is subsequently bound by UvrC and the second UvrB is released. If no lesion is found, the DNA wraps around the other UvrB subunit that will check the other stand for damage. In Halobacterium salinarum (strain ATCC 700922 / JCM 11081 / NRC-1) (Halobacterium halobium), this protein is UvrABC system protein B.